Consider the following 853-residue polypeptide: Dynamin-A (853 aa).

Residues 22–296 (PLDLPQIVVV…LMFHIRDTLP (275 aa)) enclose the Dynamin-type G domain. Positions 32–39 (GSQSSGKS) are G1 motif. Residue 32-40 (GSQSSGKSS) participates in GTP binding. Residues 58-60 (VTR) are G2 motif. The tract at residues 138 to 141 (DLPG) is G3 motif. The segment at 207 to 210 (TKLD) is G4 motif. GTP is bound by residues 207 to 213 (TKLDLMD) and 238 to 241 (NRSQ). Residues 237-240 (INRS) are G5 motif. 2 stretches are compositionally biased toward low complexity: residues 523–569 (DQYQ…QQNQ) and 590–607 (PAQQQPNQQPNQLNKGPQ). A disordered region spans residues 523 to 738 (DQYQQQQQQQ…RYQDDFYGRG (216 aa)). Residues 610–624 (PPNQSKPSSIPQNGP) are compositionally biased toward polar residues. Composition is skewed to low complexity over residues 625 to 635 (NNNNNNNNNNN) and 664 to 728 (NNSN…SSYN). The region spanning 762-853 (TELIRELLIS…IINEIRDFRN (92 aa)) is the GED domain.

The protein belongs to the TRAFAC class dynamin-like GTPase superfamily. Dynamin/Fzo/YdjA family.

The protein localises to the cytoplasm. Function in membrane trafficking processes along the endo-lysosomal pathway. This is Dynamin-A (dymA) from Dictyostelium discoideum (Social amoeba).